The chain runs to 1377 residues: MEVLMAERADLVFHNKVIDGAAMKRLISRLIDHFGMAYTSHILDQVKTLGFQQATTTSISLGIDDLLTIPSKGWLVQDAEQQSLILEKHHHYGNVHAVEKLRQSIEIWYATSEYLRQEMHPNFRMTDPSNPVHIMSFSGARGNASQVHQLVGMRGLMSDPQGQMIDLPIQSNLREGLSLTEYIISCYGARKGVVDTAVRTSDAGYLTRRLVEVVQHIVVRRTDCGTIRGISVSPRNGMTERIWIQTLIGRVLAYDIYMGPRCIAARNQDIGIGLVNRFITFRAQPIYIRTPFLCRSTSWICRLCYGRSPAHGDLVELGEAVGIIAGQSIGEPGTQLTLRTFHTGGVFTGGTAEHVRAPFNGKIQFNEDLVHPTRTRHGHPAFLCYTDLYVTIESHDILHNVNIPQKSFLLVQNDQYVESEQVIAEIRAGTSTFNLKVKEKVRKHIYSDSEGEMHWSTDVYHAPEYTYGNVHLLPKTSHLWILSGGLCRSSIVPFSLHKDQDQMNVHSLSVEQRYISDLSVTNVRVRHKLFSSDSSGKKGGRAPDYSGPDRIISNGHWNFIYPAILHENSDLLAKRRRNRFIIPFQSDQEREKELMPRSGISIEIPINGILRRNSILAYFDDPRYRRSSSGITKYGTIGVDSIVKKEDLIEYRRAKEFRPKYQMKVDRFFFIPEEVHILPASSPVMVRNNSIIGVNTRIALNTRSRVGGLVRVERKKKRIELKIFSGDIHFPGETDKISRHSGILIPPGTGKKNVKESKKWKNWIYVQRITPTKKKYFVLVRPVVTYEIADGINLETLFPQDPLQERDNVQLRVVNYILYGNGKPIRGISHTSLQLVRTCLVLNWDQDRNGSIEEVHASFVEVRANGLIRDFLKIDLVKSPILYSGKRNDTTSSGFIPNNGSDRTNINPFYFKARIQSLTQHQGTIRTLLNRNKECQSFLILSSSDCSRIGSFNGSKSHKVTKESITIKEDPTIPIRNSLGPLGTVPKIANFDSSYYLITHNQILLNKYLSLDNLKQTFQVLKYYLMDENGRIYNPDPRSNIIFNPFDLNWCFLPHDYCEETSTIINPGQFICENVCISKYGPHIKSGQILIVRVDSLVIRSAKPHLATPGATVHGHCGEILYEGDTLVTFIYEKSRSGDITQGLPKVEQVLEARSIDSISMNLEKRVEGWNERITKILGIPWGFLIGAELTIAQSRISLVNKIQKVYRSQGVQIHNRHIEIIVRQITSRVLVSEDGMSNVFSPGELIGLLRAERTGRALEEAICYRAILLGITRASLNTQSFISEASFQETARVLAKAALRGRIDWLKGLKENVVLGGMMPVGTGFKGLVRRSRQHNNIPLEIKKKNLFEGEMRDILFHHRELFDSCIPNNFPDTLE.

Residues Cys-224, Cys-294, Cys-301, and Cys-304 each contribute to the Zn(2+) site.

Belongs to the RNA polymerase beta' chain family. RpoC2 subfamily. In terms of assembly, in plastids the minimal PEP RNA polymerase catalytic core is composed of four subunits: alpha, beta, beta', and beta''. When a (nuclear-encoded) sigma factor is associated with the core the holoenzyme is formed, which can initiate transcription. Requires Zn(2+) as cofactor.

Its subcellular location is the plastid. The protein localises to the chloroplast. The catalysed reaction is RNA(n) + a ribonucleoside 5'-triphosphate = RNA(n+1) + diphosphate. Its function is as follows. DNA-dependent RNA polymerase catalyzes the transcription of DNA into RNA using the four ribonucleoside triphosphates as substrates. The chain is DNA-directed RNA polymerase subunit beta'' from Calycanthus floridus var. glaucus (Eastern sweetshrub).